We begin with the raw amino-acid sequence, 39 residues long: Photosystem II reaction center protein X (39 aa).

The chain crosses the membrane as a helical span at residues 10-30; that stretch reads WSLLWGTAIVVIPVTVGLIFI.

This sequence belongs to the PsbX family. Type 1 subfamily. PSII is composed of 1 copy each of membrane proteins PsbA, PsbB, PsbC, PsbD, PsbE, PsbF, PsbH, PsbI, PsbJ, PsbK, PsbL, PsbM, PsbT, PsbX, PsbY, PsbZ, Psb30/Ycf12, peripheral proteins PsbO, CyanoQ (PsbQ), PsbU, PsbV and a large number of cofactors. It forms dimeric complexes.

Its subcellular location is the cellular thylakoid membrane. In terms of biological role, involved in the binding and/or turnover of quinones at the Q(B) site of photosystem II (PSII). PSII is a light-driven water plastoquinone oxidoreductase, using light energy to abstract electrons from H(2)O, generating a proton gradient subsequently used for ATP formation. This is Photosystem II reaction center protein X from Nostoc punctiforme (strain ATCC 29133 / PCC 73102).